Reading from the N-terminus, the 997-residue chain is Autophagy-related protein 9 (997 aa).

Residues 1–318 (MERDEYQLPN…DVYNYYLGNG (318 aa)) lie on the Cytoplasmic side of the membrane. A Phosphoserine; by ATG1 modification is found at Ser19. Residues 29–39 (VNPSLNSQEMS) show a composition bias toward polar residues. Positions 29 to 88 (VNPSLNSQEMSNFPLPDIERGSSLLHSTNDSREDVDENDLRVPESDQGTSTEEEDEVDEE) are disordered. Acidic residues predominate over residues 79-88 (TEEEDEVDEE). Residues Lys113 and Lys121 each participate in a glycyl lysine isopeptide (Lys-Gly) (interchain with G-Cter in ubiquitin) cross-link. The residue at position 122 (Ser122) is a Phosphoserine. 2 disordered regions span residues 128–159 (VEGSTDDSVPKVGQLSSEEEEDNEFINNDGFD) and 213–235 (IHHDKDKSANNGPRNINGNQKHG). Residue Lys138 forms a Glycyl lysine isopeptide (Lys-Gly) (interchain with G-Cter in ubiquitin) linkage. Phosphoserine is present on residues Ser143 and Ser144. A compositionally biased stretch (acidic residues) spans 144–159 (SEEEEDNEFINNDGFD). Residues 221–233 (ANNGPRNINGNQK) show a composition bias toward polar residues. The helical transmembrane segment at 319 to 339 (FYCIILEKILNICTLLFVVFV) threads the bilayer. At 340-376 (STYMGHCVDYSKLPTSHRVSDIIIDKCYSNSITGFTK) the chain is on the lumenal side. A helical membrane pass occupies residues 377–397 (FFLWMFYFFVILKIVQLYFDV). The Cytoplasmic portion of the chain corresponds to 398–538 (QKLSELQNFY…EELQKRFMLA (141 aa)). The stretch at 539–559 (GFLNIILAPFLVTYFVLLYFF) is an intramembrane region. At 560-620 (RYFNEYKTSP…DQFPKEKTNL (61 aa)) the chain is on the cytoplasmic side. A helical membrane pass occupies residues 621-641 (FLKFVSFICGSFVAILAFLTV). Residues 642 to 656 (FDPENFLNFEITSDR) are Lumenal-facing. A Phosphoserine; by ATG1 modification is found at Ser657. A helical transmembrane segment spans residues 657–677 (SVIFYITILGAIWSVSRNTIT). Topologically, residues 678–723 (QEYHVFDPEETLKELYEYTHYLPKEWEGRYHKEEIKLEFCKLYNLR) are cytoplasmic. A Glycyl lysine isopeptide (Lys-Gly) (interchain with G-Cter in ubiquitin) cross-link involves residue Lys701. Residues 724–744 (IVILLRELTSLMITPFVLWFS) lie within the membrane without spanning it. Over 745 to 997 (LPSSAGRIVD…EYYKKSDVGR (253 aa)) the chain is Cytoplasmic. 2 positions are modified to phosphoserine: Ser787 and Ser792. Thr794 bears the Phosphothreonine mark. Ser802 bears the Phosphoserine; by ATG1 mark. Position 804 is a phosphothreonine; by ATG1 (Thr804). Phosphoserine; by ATG1 occurs at positions 831 and 842. Phosphoserine is present on Ser864. Residues Ser948 and Ser969 each carry the phosphoserine; by ATG1 modification.

The protein belongs to the ATG9 family. Homotrimer; forms a homotrimer with a central pore that forms a path between the two membrane leaflets. Interacts with ATG23 and ATG27 to form a cycling complex for trafficking to the PAS. Interacts (via N-terminus) with ATG11, required for recruitment of ATG9 to the PAS for the Cvt pathway during nutrient-rich conditions. Interacts (via N-terminus) with ATG17; required for recruitment to the PAS during autophagy and starved conditions. Interacts with ATG2 and ATG18; required for the retrieval of ATG9 from the PAS to the cytoplasmic pool. Interacts with ATG41. Interacts with the conserved oligomeric Golgi (COG) complex subunits COG3 and COG4. Interacts with TRS85. Post-translationally, phosphorylated by ATG1; phosphorylation is required for autophagy and cytoplasm to vacuole transport (Cvt) vesicle formation. Phosphorylation by ATG1 regulates ATG18 interaction and preautophagosome elongation. Phosphorylation at Ser-122 is required for selective autophagy by regulating anterograde trafficking and interaction with ATG23 and ATG27. Phosphorylation at Ser-122 prevents ubiquitination by the SCF(MET30) complex. In terms of processing, ubiquitinated by the SCF(MET30) complex in normal conditions, leading to its degradation by the proteasome, thereby preventing inappropriate induction of autophagy. Ubiquitination by the SCF(MET30) complex is prevented by phosphorylation at Ser-122.

Its subcellular location is the preautophagosomal structure membrane. It is found in the cytoplasmic vesicle membrane. The protein localises to the golgi apparatus membrane. It localises to the endoplasmic reticulum membrane. The protein resides in the mitochondrion membrane. The catalysed reaction is a 1,2-diacyl-sn-glycero-3-phosphocholine(in) = a 1,2-diacyl-sn-glycero-3-phosphocholine(out). It carries out the reaction a 1,2-diacyl-sn-glycero-3-phospho-L-serine(in) = a 1,2-diacyl-sn-glycero-3-phospho-L-serine(out). The enzyme catalyses a 1,2-diacyl-sn-glycero-3-phosphoethanolamine(in) = a 1,2-diacyl-sn-glycero-3-phosphoethanolamine(out). It catalyses the reaction a 1,2-diacyl-sn-glycero-3-phospho-(1D-myo-inositol-3-phosphate)(in) = a 1,2-diacyl-sn-glycero-3-phospho-(1D-myo-inositol-3-phosphate)(out). In terms of biological role, phospholipid scramblase involved in autophagy and cytoplasm to vacuole transport (Cvt) vesicle formation. Cycles between the preautophagosomal structure/phagophore assembly site (PAS) and the cytoplasmic vesicle pool and supplies membrane for the growing autophagosome. Lipid scramblase activity plays a key role in preautophagosomal structure/phagophore assembly by distributing the phospholipids that arrive through ATG2 from the cytoplasmic to the luminal leaflet of the bilayer, thereby driving autophagosomal membrane expansion. Required for mitophagy. Also involved in endoplasmic reticulum-specific autophagic process and is essential for the survival of cells subjected to severe ER stress. Recruits vesicle-tethering proteins TRS85 and YPT1 to the autophagosome formation site. Also recruits ATG23 and ATG8 to the PAS. The protein is Autophagy-related protein 9 of Saccharomyces cerevisiae (strain ATCC 204508 / S288c) (Baker's yeast).